Consider the following 361-residue polypeptide: Methyltransferase LUC1 (361 aa).

S-adenosyl-L-homocysteine contacts are provided by Tyr-18, Asn-66, Asp-89, Ser-126, and Phe-127. Residues Gln-156 and Phe-233 each coordinate Mg(2+).

It belongs to the methyltransferase superfamily. Type-7 methyltransferase family. The cofactor is Mg(2+).

The protein operates within mycotoxin biosynthesis. Its function is as follows. Methyltransferase; part of the gene cluster that mediates the biosynthesis of the mycotoxin lucilactaene and the lucilactaene-related compound NG-391 that act as cell cycle inhibitors with potent growth inhibitory activity against malarial parasites, moderate growth inhibitory activity against cancer cells, and no activity against bacteria and fungi. LUC1 performs the last step of the pathway and methylates the hydroxyl group of demethyllucilactaene at C-21 to yeald lucilactaene. The pathway begins with the hybrid PKS-NRPS synthetase LUC5 which is responsible for the condensation of one acetyl-coenzyme A (CoA) unit with six malonyl-CoA units and the amide linkage of the arising heptaketide and homoserine, subsequently releasing the first intermediate prelucilactaene B. Both the cytochrome P450 monooxygenase LUC2 and the hydrolase LUC6 function in parallel in modification of prelucilactaene B. LUC6 may catalyze the 2-pyrrolidone ring formation to form prelucilactaene C from prelucilactaene B, followed by C-15 hydroxylation by the same enzyme to give prelucilactaene D, which is then converted to prelucilactaene E by epoxidation, and finally to prelucilactaene F by cyclization. Prelucilactane D, prelucilactaene E, and prelucilactaene F can be converted to dihydrolucilactaene, NG391, and lucilactaene, respectively, via C-20 methyl group hydroxylation by the cytochrome P450 monooxygenase LUC2. However, LUC2, unlike FUS8 in fusarin C biosynthesis, is not enough for the full oxidation of the C-20 methyl group into carboxylic acid, which is a prerequisite for the final methylation step. The aldehyde dehydrogenase LUC3 is involved in the biosynthesis by further oxidation of the C-20 alcoholic analog prelucilactaene G into a carboxylic derivative. This unidentified carboxylic derivative may be converted to demethyllucilactaene. As the last step, the methyltransferase LUC1 methylates the hydroxyl group at C-21 of demethyllucilactaene to generate lucilactaene. In Fusarium sp, this protein is Methyltransferase LUC1.